The sequence spans 621 residues: Type 2 DNA topoisomerase 6 subunit B (621 aa).

ATP-binding positions include Asn48, Asp80, 101 to 102, 111 to 118, and Lys435; these read SR and GQQGIGIS.

This sequence belongs to the TOP6B family. Homodimer. Heterotetramer of two Top6A and two Top6B chains.

It catalyses the reaction ATP-dependent breakage, passage and rejoining of double-stranded DNA.. Its function is as follows. Relaxes both positive and negative superturns and exhibits a strong decatenase activity. The chain is Type 2 DNA topoisomerase 6 subunit B from Methanosarcina barkeri (strain Fusaro / DSM 804).